We begin with the raw amino-acid sequence, 388 residues long: Na(+)/H(+) antiporter NhaA (388 aa).

The next 11 membrane-spanning stretches (helical) occupy residues 8–28 (FFSAASGGAIILLLSALLGLL), 57–77 (LAEFISIAPMSLFFFVVIAEI), 93–113 (ILPLISALGGMMIPACLYGLI), 123–143 (GWAIPIATDAAFTLPIILALG), 152–172 (VWLMALAIFDDLLGIVVIALF), 175–195 (SHLNGYALFAAGLITAVMIGL), 210–230 (GVVLWWALLVSGLHPTIAGVI), 254–274 (IIAPWVTWLILPLFGFVSMGM), 278–298 (AMSFHVLLAPVPLGVALGLFL), 328–348 (LFGLSLLCGIGFTISLFIAEL), and 361–381 (YGILMGSLLSALAGWLWLRFL).

The protein belongs to the NhaA Na(+)/H(+) (TC 2.A.33) antiporter family.

It is found in the cell inner membrane. The enzyme catalyses Na(+)(in) + 2 H(+)(out) = Na(+)(out) + 2 H(+)(in). Its function is as follows. Na(+)/H(+) antiporter that extrudes sodium in exchange for external protons. This chain is Na(+)/H(+) antiporter NhaA, found in Zymomonas mobilis subsp. mobilis (strain ATCC 31821 / ZM4 / CP4).